Consider the following 195-residue polypeptide: Small ribosomal subunit protein uS4 (195 aa).

Residues 92-152 (SRLDNIVYRL…EKHKHKANKN (61 aa)) enclose the S4 RNA-binding domain.

Belongs to the universal ribosomal protein uS4 family. Part of the 30S ribosomal subunit. Contacts protein S5. The interaction surface between S4 and S5 is involved in control of translational fidelity.

Functionally, one of the primary rRNA binding proteins, it binds directly to 16S rRNA where it nucleates assembly of the body of the 30S subunit. With S5 and S12 plays an important role in translational accuracy. The protein is Small ribosomal subunit protein uS4 of Karelsulcia muelleri (strain GWSS) (Sulcia muelleri).